Consider the following 172-residue polypeptide: Ribosome maturation factor RimM (172 aa).

The PRC barrel domain occupies 96–168; sequence DGEFYYHEII…RVDVEILEGL (73 aa).

This sequence belongs to the RimM family. In terms of assembly, binds ribosomal protein uS19.

The protein localises to the cytoplasm. Its function is as follows. An accessory protein needed during the final step in the assembly of 30S ribosomal subunit, possibly for assembly of the head region. Essential for efficient processing of 16S rRNA. May be needed both before and after RbfA during the maturation of 16S rRNA. It has affinity for free ribosomal 30S subunits but not for 70S ribosomes. The chain is Ribosome maturation factor RimM from Streptococcus pneumoniae serotype 4 (strain ATCC BAA-334 / TIGR4).